Consider the following 312-residue polypeptide: Taste receptor type 2 member 9 (312 aa).

Topologically, residues 1-9 (MPSAIEAIY) are extracellular. A helical membrane pass occupies residues 10–32 (IILIAGELTIGIWGNGFIVLVNC). Topologically, residues 33 to 52 (XDWLKRRDISLIDIILISLA) are cytoplasmic. The helical transmembrane segment at 53–72 (ISRICLLCVISLDGFFMLLF) threads the bilayer. Residues 73-86 (PGTYGNSVLVSIVN) lie on the Extracellular side of the membrane. A helical transmembrane segment spans residues 87–109 (VVWTFANNSSLWFTSCLSIFYLL). Residues 110–128 (KIANISHPFFFWLKLKINK) lie on the Cytoplasmic side of the membrane. A helical transmembrane segment spans residues 129–146 (VMLAILLGSFLISLIISV). Residues 147 to 180 (XKNDDMWYHLFKVSXEENITWEFKVSKIPGTFKQ) are Extracellular-facing. Residue asparagine 164 is glycosylated (N-linked (GlcNAc...) asparagine). A helical membrane pass occupies residues 181-203 (LTLNLGGRVPFILCLISFFLLLF). Residues 204–234 (SLVRHTKQIQLHATGFRDPSTEAHMRAIKAV) are Cytoplasmic-facing. The helical transmembrane segment at 235–257 (IIFLLLLIVYYPVFLVMTSSALI) threads the bilayer. At 258-261 (PQGK) the chain is on the extracellular side. The helical transmembrane segment at 262-284 (LVLMIGDIVTVIFPSSHSFILIM) threads the bilayer. Over 285–312 (GNSKLREAFLKMLRFVKGFLRRRKPFVP) the chain is Cytoplasmic.

It belongs to the G-protein coupled receptor T2R family.

The protein localises to the membrane. In terms of biological role, gustducin-coupled receptor implicated in the perception of bitter compounds in the oral cavity and the gastrointestinal tract. Signals through PLCB2 and the calcium-regulated cation channel TRPM5. The protein is Taste receptor type 2 member 9 (TAS2R9) of Pan troglodytes (Chimpanzee).